The sequence spans 439 residues: Vacuolar zinc transporter COT1 (439 aa).

Over 1–9 (MKLGSKQVK) the chain is Cytoplasmic. Residues 10–30 (IISLLLLDTVFFGIEITTGYL) traverse the membrane as a helical segment. Residues 31–33 (SHS) are Vacuolar-facing. Residues 34–54 (LALIADSFHMLNDIISLVVAL) traverse the membrane as a helical segment. Residues 55-76 (WAVNVAKNRNPDSTYTYGWKRA) are Cytoplasmic-facing. Residues 77 to 97 (EILGALINAVFLIALCVSILI) traverse the membrane as a helical segment. Over 98–113 (EALQRIIAPPVIENPK) the chain is Vacuolar. The chain crosses the membrane as a helical span at residues 114 to 134 (FVLYVGVAGLISNTVGLFLFH). At 135-244 (DNDQEHGHGH…RKRSLNMHGV (110 aa)) the chain is on the cytoplasmic side. Short sequence motifs (histidine repeat) lie at residues 140–144 (HGHGH), 165–169 (HTHAH), and 219–223 (SSHTI). Positions 207–230 (PENASKTPSYSTSSHTIASGGNYT) are enriched in polar residues. Positions 207–231 (PENASKTPSYSTSSHTIASGGNYTE) are disordered. At Ser225 the chain carries Phosphoserine. A helical membrane pass occupies residues 245 to 265 (FLHVLGDALGNIGVMLSAFFI). The Vacuolar segment spans residues 266–274 (WKTDYSWKY). Residues 275–295 (YTDPLVSLIITGIIFSSALPL) traverse the membrane as a helical segment. Residues 296–439 (SCKASKILLQ…CNTADCLEDH (144 aa)) are Cytoplasmic-facing. Lys301 is covalently cross-linked (Glycyl lysine isopeptide (Lys-Gly) (interchain with G-Cter in ubiquitin)). Residues 388-402 (TSTERAGDSQGDHLQ) show a composition bias toward basic and acidic residues. The segment at 388–408 (TSTERAGDSQGDHLQNDPLSL) is disordered.

Belongs to the cation diffusion facilitator (CDF) transporter (TC 2.A.4) family. SLC30A subfamily.

Its subcellular location is the vacuole membrane. It catalyses the reaction Zn(2+)(in) = Zn(2+)(out). Functionally, vacuolar transporter that regulates zinc homeostasis by mediating zinc transport and storage into the vacuole. Plays a role in resistance to zinc shock resulting from sudden influx of zinc into cytoplasm. May also participate in the regulation of cobalt levels under normal physiological conditions and may be important in the supply of metal that is required for metalloenzyme or cofactor synthesis. Involved in the resistance to cobalt and rhodium ions. This is Vacuolar zinc transporter COT1 from Saccharomyces cerevisiae (strain ATCC 204508 / S288c) (Baker's yeast).